A 454-amino-acid polypeptide reads, in one-letter code: Laccase-3 (454 aa).

2 consecutive Plastocyanin-like domains span residues 1-95 and 101-252; these read PGPT…GPAT and DLGV…YSGA. The N-linked (GlcNAc...) asparagine glycan is linked to asparagine 24. Histidine 29, histidine 31, histidine 73, and histidine 75 together coordinate Cu cation. N-linked (GlcNAc...) asparagine glycans are attached at residues asparagine 138, asparagine 169, asparagine 218, asparagine 314, and asparagine 334. The 136-residue stretch at 319–454 folds into the Plastocyanin-like 3 domain; it reads DVDWKKPILQ…SEGLAVQFQG (136 aa). 3 residues coordinate Cu cation: histidine 375, histidine 378, and histidine 380. A glycan (N-linked (GlcNAc...) asparagine) is linked at asparagine 395. Positions 437, 438, 439, and 443 each coordinate Cu cation.

This sequence belongs to the multicopper oxidase family. The cofactor is Cu cation.

It localises to the secreted. The enzyme catalyses 4 hydroquinone + O2 = 4 benzosemiquinone + 2 H2O. In terms of biological role, lignin degradation and detoxification of lignin-derived products. In Botryotinia fuckeliana (Noble rot fungus), this protein is Laccase-3 (lcc3).